Here is a 685-residue protein sequence, read N- to C-terminus: Threonine--tRNA ligase (685 aa).

Positions 1–28 (MTSPAPEHSAAPLRVPAGTTAGTAVREA) are disordered. Residues 1 to 65 (MTSPAPEHSA…EVDVDVEPVA (65 aa)) form the TGS domain. Residues 262–568 (DHRKLGTELD…LTEHYAGAFP (307 aa)) form a catalytic region. Zn(2+) contacts are provided by Cys-367, His-418, and His-545.

Belongs to the class-II aminoacyl-tRNA synthetase family. As to quaternary structure, homodimer. Requires Zn(2+) as cofactor.

Its subcellular location is the cytoplasm. The enzyme catalyses tRNA(Thr) + L-threonine + ATP = L-threonyl-tRNA(Thr) + AMP + diphosphate + H(+). In terms of biological role, catalyzes the attachment of threonine to tRNA(Thr) in a two-step reaction: L-threonine is first activated by ATP to form Thr-AMP and then transferred to the acceptor end of tRNA(Thr). Also edits incorrectly charged L-seryl-tRNA(Thr). This is Threonine--tRNA ligase from Rhodococcus erythropolis (strain PR4 / NBRC 100887).